We begin with the raw amino-acid sequence, 247 residues long: UPF0309 protein lin2794 (247 aa).

The SIS domain occupies 31–214; that stretch reads VAESIENDGV…EKMVNDNFTP (184 aa).

It belongs to the UPF0309 family.

The protein is UPF0309 protein lin2794 of Listeria innocua serovar 6a (strain ATCC BAA-680 / CLIP 11262).